Reading from the N-terminus, the 213-residue chain is Orotate phosphoribosyltransferase (213 aa).

A 5-phospho-alpha-D-ribose 1-diphosphate-binding site is contributed by Lys26. 34-35 (FF) serves as a coordination point for orotate. 5-phospho-alpha-D-ribose 1-diphosphate contacts are provided by residues 72–73 (YK), Arg99, Lys100, Lys103, His105, and 124–132 (DDVITAGTA). Thr128 and Arg156 together coordinate orotate.

It belongs to the purine/pyrimidine phosphoribosyltransferase family. PyrE subfamily. In terms of assembly, homodimer. The cofactor is Mg(2+).

It carries out the reaction orotidine 5'-phosphate + diphosphate = orotate + 5-phospho-alpha-D-ribose 1-diphosphate. It functions in the pathway pyrimidine metabolism; UMP biosynthesis via de novo pathway; UMP from orotate: step 1/2. Catalyzes the transfer of a ribosyl phosphate group from 5-phosphoribose 1-diphosphate to orotate, leading to the formation of orotidine monophosphate (OMP). In Haemophilus ducreyi (strain 35000HP / ATCC 700724), this protein is Orotate phosphoribosyltransferase.